The sequence spans 224 residues: C-&gt;U-editing enzyme APOBEC-2 (224 aa).

Residues 1–24 (MAQKEEAAVATEAASQNGEDLENL) are disordered. Residues E60 and H98 each coordinate Zn(2+). In terms of domain architecture, CMP/dCMP-type deaminase spans 64 to 169 (GRNKTFLCYV…PEIQAALKKL (106 aa)). E100 (proton donor) is an active-site residue. Zn(2+) contacts are provided by C128 and C131.

It belongs to the cytidine and deoxycytidylate deaminase family. Homotetramer. Requires Zn(2+) as cofactor. As to expression, expressed exclusively in heart and skeletal muscle.

The catalysed reaction is cytidine(6666) in apoB mRNA + H2O + H(+) = uridine(6666) in apoB mRNA + NH4(+). Probable C to U editing enzyme whose physiological substrate is not yet known. Does not display detectable apoB mRNA editing. Has a low intrinsic cytidine deaminase activity. May play a role in the epigenetic regulation of gene expression through the process of active DNA demethylation. This Homo sapiens (Human) protein is C-&gt;U-editing enzyme APOBEC-2 (APOBEC2).